A 393-amino-acid chain; its full sequence is Homoserine O-succinyltransferase (393 aa).

Residues 62 to 372 (NAVLVCHALN…PHGHDAFLLD (311 aa)) form the AB hydrolase-1 domain. The active-site Nucleophile is Ser-168. Arg-238 serves as a coordination point for substrate. Catalysis depends on residues Asp-333 and His-366. Asp-367 is a binding site for substrate.

It belongs to the AB hydrolase superfamily. MetX family. As to quaternary structure, homodimer.

It is found in the cytoplasm. It carries out the reaction L-homoserine + succinyl-CoA = O-succinyl-L-homoserine + CoA. Its pathway is amino-acid biosynthesis; L-methionine biosynthesis via de novo pathway; O-succinyl-L-homoserine from L-homoserine: step 1/1. Functionally, transfers a succinyl group from succinyl-CoA to L-homoserine, forming succinyl-L-homoserine. This Cupriavidus necator (strain ATCC 17699 / DSM 428 / KCTC 22496 / NCIMB 10442 / H16 / Stanier 337) (Ralstonia eutropha) protein is Homoserine O-succinyltransferase.